The sequence spans 657 residues: C4-dicarboxylate transport sensor protein DctS (657 aa).

Residues 1–26 are Cytoplasmic-facing; it reads MRDTTGGPAGAEVWTVPGLLGARKLD. The chain crosses the membrane as a helical span at residues 27–51; sequence LLALIPLVAIVALMTLVGALLFAVA. Residues 52–252 lie on the Periplasmic side of the membrane; that stretch reads QSDANRARAK…AYDAPDAFGN (201 aa). The chain crosses the membrane as a helical span at residues 253-273; that stretch reads AALLAAIGALSVFAVLAMVVL. Over 274–657 the chain is Cytoplasmic; that stretch reads HRNALRRRMA…LPVPQEGAPA (384 aa). Residues 289-361 enclose the PAS domain; that stretch reads AEMAFRRAME…ARQRQLIEGQ (73 aa). In terms of domain architecture, PAC spans 365-417; that stretch reads QAFETRFRRSDGSEIEVQVFEAPLIDAGGRHRGWMGSVIDITQAKQAARLARA. The tract at residues 407–422 is inter-domain linker; the sequence is QAKQAARLARAQDESL. One can recognise a Histidine kinase domain in the interval 437–652; that stretch reads TLAHELNQPL…VFTVTLPVPQ (216 aa). The residue at position 440 (histidine 440) is a Phosphohistidine; by autocatalysis.

It localises to the cell inner membrane. The catalysed reaction is ATP + protein L-histidine = ADP + protein N-phospho-L-histidine.. In terms of biological role, member of the two-component regulatory system DctS/DctR involved in the transport of C4-dicarboxylates. DctS functions as a membrane-associated protein kinase that phosphorylates DctR in response to environmental signals. This is C4-dicarboxylate transport sensor protein DctS (dctS) from Rhodobacter capsulatus (Rhodopseudomonas capsulata).